A 346-amino-acid polypeptide reads, in one-letter code: Protein PXR1 (346 aa).

2 disordered regions span residues 1 to 27 (MGLA…NTEN) and 146 to 315 (EDAE…QVSV). The segment covering 15–27 (DPNNTRWSRNTEN) has biased composition (polar residues). One can recognise a G-patch domain in the interval 25–79 (TENFGHRMLRSQGWEPGQYLGPQDASHAVYHTAASASHIKVALKEDNLGLGAKMN). A compositionally biased stretch (basic residues) spans 215 to 230 (SKSKKSHKSKKEKKRR). Acidic residues predominate over residues 235–245 (ASDEQESEDEE). Residues 249–274 (KRRKKEKKERKERRREKREKKLKKKQ) show a composition bias toward basic residues. Residues 293-314 (GVDTGASTPVASGTSTPVSQVS) are compositionally biased toward polar residues.

Belongs to the PINX1 family.

The protein localises to the nucleus. It is found in the nucleolus. Involved in rRNA-processing at A0, A1 and A2 sites and negatively regulates telomerase. The protein is Protein PXR1 (PXR1) of Pyricularia oryzae (strain 70-15 / ATCC MYA-4617 / FGSC 8958) (Rice blast fungus).